Reading from the N-terminus, the 304-residue chain is Sulfate adenylyltransferase subunit 2 (304 aa).

The protein belongs to the PAPS reductase family. CysD subfamily. In terms of assembly, heterodimer composed of CysD, the smaller subunit, and CysNC.

It carries out the reaction sulfate + ATP + H(+) = adenosine 5'-phosphosulfate + diphosphate. Its pathway is sulfur metabolism; hydrogen sulfide biosynthesis; sulfite from sulfate: step 1/3. In terms of biological role, with CysN forms the ATP sulfurylase (ATPS) that catalyzes the adenylation of sulfate producing adenosine 5'-phosphosulfate (APS) and diphosphate, the first enzymatic step in sulfur assimilation pathway. APS synthesis involves the formation of a high-energy phosphoric-sulfuric acid anhydride bond driven by GTP hydrolysis by CysN coupled to ATP hydrolysis by CysD. The chain is Sulfate adenylyltransferase subunit 2 from Xylella fastidiosa (strain 9a5c).